A 220-amino-acid chain; its full sequence is Phosphatidylinositol phosphate synthase (220 aa).

2 helical membrane passes run 21 to 46 and 52 to 72; these read LLRA…ALTL and LFWG…DGAM. 29–32 is a binding site for a CDP-1,2-diacyl-sn-glycerol; it reads DTVT. Residues D66 and D69 each coordinate Mg(2+). The a CDP-1,2-diacyl-sn-glycerol site is built by G70, R74, and T80. D87 and D91 together coordinate Mg(2+). D91 acts as the Proton acceptor in catalysis. Transmembrane regions (helical) follow at residues 93–110, 116–134, 154–171, and 177–194; these read VADG…AFGW, VVAT…YVKA, LIIV…GVQW, and MWVL…RMHA.

The protein belongs to the CDP-alcohol phosphatidyltransferase class-I family. Homodimer. Mg(2+) serves as cofactor.

The protein resides in the cell membrane. The enzyme catalyses a CDP-1,2-diacyl-sn-glycerol + 1D-myo-inositol 3-phosphate = a 1,2-diacyl-sn-glycero-3-phospho-(1D-myo-inositol-3-phosphate) + CMP + H(+). The catalysed reaction is 1,2-di-(9Z-octadecenoyl)-sn-glycero-3-cytidine-5'-diphosphate + 1D-myo-inositol 3-phosphate = 1,2-di-(9Z-octadecenoyl)-sn-glycero-3-phospho-(1D-myo-inositol-3-phosphate) + CMP + H(+). It functions in the pathway phospholipid metabolism; phosphatidylinositol phosphate biosynthesis. Its function is as follows. Catalyzes the conjugation of the 1'-hydroxyl group of D-myo-inositol-3-phosphate (also named L-myo-inositol-1-phosphate) with a lipid tail of cytidine diphosphate diacylglycerol (CDP-DAG), forming phosphatidylinositol phosphate (PIP) and CMP. PIP is a precursor of phosphatidylinositol (PI) which is an essential lipid for mycobacteria required for formation of their cell wall. The polypeptide is Phosphatidylinositol phosphate synthase (Mycobacteroides abscessus (strain ATCC 19977 / DSM 44196 / CCUG 20993 / CIP 104536 / JCM 13569 / NCTC 13031 / TMC 1543 / L948) (Mycobacterium abscessus)).